We begin with the raw amino-acid sequence, 348 residues long: Aspartate carbamoyltransferase catalytic subunit (348 aa).

Residues R59 and T60 each coordinate carbamoyl phosphate. Residue K87 participates in L-aspartate binding. 3 residues coordinate carbamoyl phosphate: R109, H142, and Q145. L-aspartate contacts are provided by R182 and R253. G294 and P295 together coordinate carbamoyl phosphate.

This sequence belongs to the aspartate/ornithine carbamoyltransferase superfamily. ATCase family. In terms of assembly, heterododecamer (2C3:3R2) of six catalytic PyrB chains organized as two trimers (C3), and six regulatory PyrI chains organized as three dimers (R2).

The enzyme catalyses carbamoyl phosphate + L-aspartate = N-carbamoyl-L-aspartate + phosphate + H(+). The protein operates within pyrimidine metabolism; UMP biosynthesis via de novo pathway; (S)-dihydroorotate from bicarbonate: step 2/3. Its function is as follows. Catalyzes the condensation of carbamoyl phosphate and aspartate to form carbamoyl aspartate and inorganic phosphate, the committed step in the de novo pyrimidine nucleotide biosynthesis pathway. The sequence is that of Aspartate carbamoyltransferase catalytic subunit from Prochlorococcus marinus (strain MIT 9303).